Consider the following 128-residue polypeptide: Large ribosomal subunit protein bL20 (128 aa).

The protein belongs to the bacterial ribosomal protein bL20 family.

In terms of biological role, binds directly to 23S ribosomal RNA and is necessary for the in vitro assembly process of the 50S ribosomal subunit. It is not involved in the protein synthesizing functions of that subunit. In Corynebacterium efficiens (strain DSM 44549 / YS-314 / AJ 12310 / JCM 11189 / NBRC 100395), this protein is Large ribosomal subunit protein bL20.